The sequence spans 114 residues: UPF0339 protein plu2779 (114 aa).

A run of 2 repeats spans residues 11–59 (TKNK…NFEI) and 62–110 (NKSG…VRDL).

It belongs to the UPF0339 family. Duplicated subfamily.

The sequence is that of UPF0339 protein plu2779 from Photorhabdus laumondii subsp. laumondii (strain DSM 15139 / CIP 105565 / TT01) (Photorhabdus luminescens subsp. laumondii).